The sequence spans 108 residues: uncharacterized protein (108 aa).

A run of 2 helical transmembrane segments spans residues 32–52 (YFFF…LLAI) and 68–88 (SYLL…LVVG).

Its subcellular location is the membrane. This is an uncharacterized protein from Saccharomyces cerevisiae (strain ATCC 204508 / S288c) (Baker's yeast).